Reading from the N-terminus, the 290-residue chain is 4-hydroxybenzoate octaprenyltransferase (290 aa).

The next 9 membrane-spanning stretches (helical) occupy residues 23–43, 46–66, 96–116, 118–138, 141–161, 169–189, 212–232, 235–255, and 265–285; these read IGTELVFWPTMWALWIASDGY, LKMFVVMTLGVLFMRAAGCAI, AIWVFLALVAASAALLLFLPI, TFYWSFGALFLAFIYPFMKRY, LPQVFLGAAFSWAIPMAYTAT, CWLLYFGNLAWTVAYDTQYAI, IPIISTLQLSSLLLIGMALYI, LLFPWGIIGLVVVAVDFIYQW, and LCFWAFRHNRWVGLIIFLAIL.

Belongs to the UbiA prenyltransferase family. Requires Mg(2+) as cofactor.

It is found in the cell inner membrane. The catalysed reaction is all-trans-octaprenyl diphosphate + 4-hydroxybenzoate = 4-hydroxy-3-(all-trans-octaprenyl)benzoate + diphosphate. Its pathway is cofactor biosynthesis; ubiquinone biosynthesis. Functionally, catalyzes the prenylation of para-hydroxybenzoate (PHB) with an all-trans polyprenyl group. Mediates the second step in the final reaction sequence of ubiquinone-8 (UQ-8) biosynthesis, which is the condensation of the polyisoprenoid side chain with PHB, generating the first membrane-bound Q intermediate 3-octaprenyl-4-hydroxybenzoate. The polypeptide is 4-hydroxybenzoate octaprenyltransferase (Acinetobacter baylyi (strain ATCC 33305 / BD413 / ADP1)).